Reading from the N-terminus, the 216-residue chain is Probable nicotinate-nucleotide adenylyltransferase (216 aa).

Belongs to the NadD family.

It catalyses the reaction nicotinate beta-D-ribonucleotide + ATP + H(+) = deamido-NAD(+) + diphosphate. Its pathway is cofactor biosynthesis; NAD(+) biosynthesis; deamido-NAD(+) from nicotinate D-ribonucleotide: step 1/1. In terms of biological role, catalyzes the reversible adenylation of nicotinate mononucleotide (NaMN) to nicotinic acid adenine dinucleotide (NaAD). This chain is Probable nicotinate-nucleotide adenylyltransferase, found in Geobacter sulfurreducens (strain ATCC 51573 / DSM 12127 / PCA).